The sequence spans 409 residues: Microfibrillar-associated protein 3-like (409 aa).

The signal sequence occupies residues 1-28 (MDRLKSHLTVCFLPSVPFLILVSTLATA). The Extracellular segment spans residues 29–149 (KSVTNSTLNG…LRVIFTSGDM (121 aa)). Asn-33, Asn-37, Asn-67, Asn-111, and Asn-135 each carry an N-linked (GlcNAc...) asparagine glycan. Residues 47-141 (PVIIARTDHI…GTVNNTVTLR (95 aa)) enclose the Ig-like C2-type domain. A disulfide bond links Cys-68 and Cys-125. Residues 150–172 (GVYYMVVCLVAFTIVMVLNITRL) form a helical membrane-spanning segment. At 173–409 (CMMSSHLKKT…NTCIIYESHV (237 aa)) the chain is on the cytoplasmic side. Tyr-287 bears the Phosphotyrosine; by EGFR mark. Disordered regions lie at residues 292–311 (SLKRSDSPAADSDASSLHEQ) and 320–385 (SVHP…VLPP). Phosphoserine occurs at positions 298, 303, 306, and 307. Basic and acidic residues predominate over residues 339–355 (EVKDVEETELSAEHSPE). Over residues 363–377 (VTSTELTSEEPTPVE) the composition is skewed to low complexity.

Highly expressed in testis.

The protein localises to the cell membrane. It is found in the nucleus. The protein resides in the cytoplasm. Functionally, may participate in the nuclear signaling of EGFR and MAPK1/ERK2. May a have a role in metastasis. The chain is Microfibrillar-associated protein 3-like (MFAP3L) from Homo sapiens (Human).